We begin with the raw amino-acid sequence, 365 residues long: Chorismate synthase (365 aa).

2 residues coordinate NADP(+): arginine 48 and arginine 54. FMN contacts are provided by residues 131–133, 243–244, glycine 288, 303–307, and arginine 329; these read RSS, NA, and KPTSS.

It belongs to the chorismate synthase family. Homotetramer. It depends on FMNH2 as a cofactor.

The enzyme catalyses 5-O-(1-carboxyvinyl)-3-phosphoshikimate = chorismate + phosphate. It participates in metabolic intermediate biosynthesis; chorismate biosynthesis; chorismate from D-erythrose 4-phosphate and phosphoenolpyruvate: step 7/7. Its function is as follows. Catalyzes the anti-1,4-elimination of the C-3 phosphate and the C-6 proR hydrogen from 5-enolpyruvylshikimate-3-phosphate (EPSP) to yield chorismate, which is the branch point compound that serves as the starting substrate for the three terminal pathways of aromatic amino acid biosynthesis. This reaction introduces a second double bond into the aromatic ring system. The protein is Chorismate synthase of Sinorhizobium medicae (strain WSM419) (Ensifer medicae).